A 712-amino-acid chain; its full sequence is Elongation factor G (712 aa).

The tr-type G domain maps to 8–290 (TRYRNIGISA…AVIEFLPSPT (283 aa)). GTP contacts are provided by residues 17 to 24 (AHIDAGKT), 88 to 92 (DTPGH), and 142 to 145 (NKMD).

This sequence belongs to the TRAFAC class translation factor GTPase superfamily. Classic translation factor GTPase family. EF-G/EF-2 subfamily.

It localises to the cytoplasm. Catalyzes the GTP-dependent ribosomal translocation step during translation elongation. During this step, the ribosome changes from the pre-translocational (PRE) to the post-translocational (POST) state as the newly formed A-site-bound peptidyl-tRNA and P-site-bound deacylated tRNA move to the P and E sites, respectively. Catalyzes the coordinated movement of the two tRNA molecules, the mRNA and conformational changes in the ribosome. This Acinetobacter baumannii (strain AB307-0294) protein is Elongation factor G.